The following is a 159-amino-acid chain: MKHTIAVLVENKPGVLARVAGLFRRRGFNIESLTVGTTERDDLSRMTIVVEGDDKVVEQVIKQLNKLIETIKVSEITESSVERELCLIRVHAPPEKRGEIVELTNIFRARIVDVSRDSFIIEVTGDEDKVSAFIDLMRQYGIKELARTGKVAMVRGNKK.

The ACT domain occupies 4-78 (TIAVLVENKP…ETIKVSEITE (75 aa)).

This sequence belongs to the acetolactate synthase small subunit family. Dimer of large and small chains.

It carries out the reaction 2 pyruvate + H(+) = (2S)-2-acetolactate + CO2. It participates in amino-acid biosynthesis; L-isoleucine biosynthesis; L-isoleucine from 2-oxobutanoate: step 1/4. It functions in the pathway amino-acid biosynthesis; L-valine biosynthesis; L-valine from pyruvate: step 1/4. This chain is Probable acetolactate synthase small subunit (ilvH), found in Archaeoglobus fulgidus (strain ATCC 49558 / DSM 4304 / JCM 9628 / NBRC 100126 / VC-16).